Reading from the N-terminus, the 345-residue chain is Ubiquitin-associated domain-containing protein 2 (345 aa).

A signal peptide spans 1 to 39 (MFTSTGSSGLYKAPLSKSLLLVPSALSLLLTLLLPHCQK). The Extracellular segment spans residues 40-91 (FFVYDLHAVKHDLQIWRLICGRIICLDLKDAFCSGLLIYNFRIFERRYGSRK). A helical membrane pass occupies residues 92–112 (FASFLLGSWVLSALFDFILVE). Over 113 to 125 (AVQYSLGVTVASN) the chain is Cytoplasmic. A helical membrane pass occupies residues 126 to 146 (LPSGFLAPVFALFVPFHCSIP). The Extracellular portion of the chain corresponds to 147–163 (RVQVAQILGPLSITNKT). Asn161 is a glycosylation site (N-linked (GlcNAc...) asparagine). Residues 164–184 (LIYILGLQLFTSGSYIWIVAM) form a helical membrane-spanning segment. At 185–345 (SGLISGMCYD…NVATNFLLQH (161 aa)) the chain is on the cytoplasmic side. Residues 287–306 (NINYQDGPRSEQRASPPLEV) form a disordered region. One can recognise a UBA domain in the interval 305–345 (EVSEEQVARLMEMGFSRGDALEALRASNNDLNVATNFLLQH).

As to quaternary structure, interacts with LMBR1L, FAF2, AMFR and VCP.

The protein localises to the endoplasmic reticulum membrane. Restricts trafficking of FAF2 from the endoplasmic reticulum to lipid droplets. In association with LMBR1L and E3 ubiquitin-protein ligase AMFR, negatively regulates the canonical Wnt signaling pathway in the lymphocytes by promoting the ubiquitin-mediated degradation of CTNNB1 and Wnt receptors FZD6 and LRP6. The protein is Ubiquitin-associated domain-containing protein 2 (Ubac2) of Mus musculus (Mouse).